A 750-amino-acid chain; its full sequence is Ribosomal RNA large subunit methyltransferase K/L (750 aa).

Residues 46-157 (TAYRLCLWSR…RGEAILSLDL (112 aa)) form the THUMP domain.

Belongs to the methyltransferase superfamily. RlmKL family.

The protein localises to the cytoplasm. The catalysed reaction is guanosine(2445) in 23S rRNA + S-adenosyl-L-methionine = N(2)-methylguanosine(2445) in 23S rRNA + S-adenosyl-L-homocysteine + H(+). It catalyses the reaction guanosine(2069) in 23S rRNA + S-adenosyl-L-methionine = N(2)-methylguanosine(2069) in 23S rRNA + S-adenosyl-L-homocysteine + H(+). In terms of biological role, specifically methylates the guanine in position 2445 (m2G2445) and the guanine in position 2069 (m7G2069) of 23S rRNA. The protein is Ribosomal RNA large subunit methyltransferase K/L of Pseudomonas savastanoi pv. phaseolicola (strain 1448A / Race 6) (Pseudomonas syringae pv. phaseolicola (strain 1448A / Race 6)).